A 127-amino-acid polypeptide reads, in one-letter code: Phosphoribosyl-AMP cyclohydrolase (127 aa).

Asp96 is a Mg(2+) binding site. Cys97 contributes to the Zn(2+) binding site. Mg(2+) is bound by residues Asp98 and Asp100. Residues Cys113 and Cys120 each coordinate Zn(2+).

Belongs to the PRA-CH family. In terms of assembly, homodimer. Mg(2+) is required as a cofactor. Requires Zn(2+) as cofactor.

It is found in the cytoplasm. The catalysed reaction is 1-(5-phospho-beta-D-ribosyl)-5'-AMP + H2O = 1-(5-phospho-beta-D-ribosyl)-5-[(5-phospho-beta-D-ribosylamino)methylideneamino]imidazole-4-carboxamide. It participates in amino-acid biosynthesis; L-histidine biosynthesis; L-histidine from 5-phospho-alpha-D-ribose 1-diphosphate: step 3/9. In terms of biological role, catalyzes the hydrolysis of the adenine ring of phosphoribosyl-AMP. The sequence is that of Phosphoribosyl-AMP cyclohydrolase from Corynebacterium jeikeium (strain K411).